The chain runs to 281 residues: NADPH-dependent 7-cyano-7-deazaguanine reductase (281 aa).

Residue 88-90 (IES) coordinates substrate. An NADPH-binding site is contributed by 90–91 (SK). Cys-189 (thioimide intermediate) is an active-site residue. Asp-196 functions as the Proton donor in the catalytic mechanism. 228–229 (HE) is a binding site for substrate. 257 to 258 (RG) serves as a coordination point for NADPH.

The protein belongs to the GTP cyclohydrolase I family. QueF type 2 subfamily. Homodimer.

It is found in the cytoplasm. The enzyme catalyses 7-aminomethyl-7-carbaguanine + 2 NADP(+) = 7-cyano-7-deazaguanine + 2 NADPH + 3 H(+). It functions in the pathway tRNA modification; tRNA-queuosine biosynthesis. In terms of biological role, catalyzes the NADPH-dependent reduction of 7-cyano-7-deazaguanine (preQ0) to 7-aminomethyl-7-deazaguanine (preQ1). In Proteus mirabilis (strain HI4320), this protein is NADPH-dependent 7-cyano-7-deazaguanine reductase.